We begin with the raw amino-acid sequence, 240 residues long: Nuclear receptor-interacting protein 3 (240 aa).

The chain is Nuclear receptor-interacting protein 3 (Nrip3) from Mus musculus (Mouse).